The chain runs to 248 residues: Probable transcriptional regulatory protein PSPTO_3980 (248 aa).

Belongs to the TACO1 family.

The protein resides in the cytoplasm. This chain is Probable transcriptional regulatory protein PSPTO_3980, found in Pseudomonas syringae pv. tomato (strain ATCC BAA-871 / DC3000).